We begin with the raw amino-acid sequence, 315 residues long: Ribosomal RNA small subunit methyltransferase H (315 aa).

Residues 37–39 (GGH), aspartate 57, phenylalanine 83, aspartate 105, and glutamine 112 contribute to the S-adenosyl-L-methionine site.

Belongs to the methyltransferase superfamily. RsmH family.

The protein localises to the cytoplasm. It catalyses the reaction cytidine(1402) in 16S rRNA + S-adenosyl-L-methionine = N(4)-methylcytidine(1402) in 16S rRNA + S-adenosyl-L-homocysteine + H(+). In terms of biological role, specifically methylates the N4 position of cytidine in position 1402 (C1402) of 16S rRNA. This is Ribosomal RNA small subunit methyltransferase H from Pseudomonas putida (strain ATCC 47054 / DSM 6125 / CFBP 8728 / NCIMB 11950 / KT2440).